We begin with the raw amino-acid sequence, 81 residues long: Small ribosomal subunit protein bS16 (81 aa).

This sequence belongs to the bacterial ribosomal protein bS16 family.

This Agathobacter rectalis (strain ATCC 33656 / DSM 3377 / JCM 17463 / KCTC 5835 / VPI 0990) (Eubacterium rectale) protein is Small ribosomal subunit protein bS16.